The following is a 436-amino-acid chain: Calcium/calmodulin-regulated receptor-like kinase 2 (436 aa).

A helical transmembrane segment spans residues 7–34 (LVVIGISVGLALGLLLALLLFFAIKWYY). The disordered stretch occupies residues 65-88 (DRANTESSQPPENGAPTQHQPWWN). The segment covering 69–88 (TESSQPPENGAPTQHQPWWN) has biased composition (polar residues). Positions 114–375 (QNFTTVLGQG…PSIGEVTQFI (262 aa)) constitute a Protein kinase domain. ATP is bound by residues 120–128 (LGQGSFGPV) and Lys-142. A Phosphotyrosine modification is found at Tyr-187. Asp-239 functions as the Proton acceptor in the catalytic mechanism. Thr-276 is modified (phosphothreonine). Phosphotyrosine is present on Tyr-284.

This sequence belongs to the protein kinase superfamily. Ser/Thr protein kinase family.

It localises to the cell membrane. It catalyses the reaction L-seryl-[protein] + ATP = O-phospho-L-seryl-[protein] + ADP + H(+). The enzyme catalyses L-threonyl-[protein] + ATP = O-phospho-L-threonyl-[protein] + ADP + H(+). This is Calcium/calmodulin-regulated receptor-like kinase 2 from Arabidopsis thaliana (Mouse-ear cress).